The sequence spans 312 residues: Bark storage protein A (312 aa).

Positions 1–24 (MPQQSMQASLIDPIAEIERSNCKI) are cleaved as a signal peptide. N70 is a glycosylation site (N-linked (GlcNAc...) asparagine).

This sequence to wound-inducible poplar endochitinases. As to quaternary structure, monomer. In terms of tissue distribution, bark.

In terms of biological role, may play a role in nitrogen storage. The chain is Bark storage protein A (BSPA) from Populus deltoides (Eastern poplar).